Here is a 365-residue protein sequence, read N- to C-terminus: Phospho-N-acetylmuramoyl-pentapeptide-transferase (365 aa).

Helical transmembrane passes span 22–42 (YISV…LALG), 74–94 (TMGG…WGDL), 95–115 (TSIY…IGFF), 134–154 (KFAL…YLLS), 168–188 (SLYI…IING), 201–221 (GLAI…AYIE), 240–260 (LAEV…FLWF), 267–287 (VFMG…IAVM), 292–312 (LIFF…MLQV), and 342–362 (KVVI…LAAI).

Belongs to the glycosyltransferase 4 family. MraY subfamily. Mg(2+) is required as a cofactor.

It localises to the cell inner membrane. It catalyses the reaction UDP-N-acetyl-alpha-D-muramoyl-L-alanyl-gamma-D-glutamyl-meso-2,6-diaminopimeloyl-D-alanyl-D-alanine + di-trans,octa-cis-undecaprenyl phosphate = di-trans,octa-cis-undecaprenyl diphospho-N-acetyl-alpha-D-muramoyl-L-alanyl-D-glutamyl-meso-2,6-diaminopimeloyl-D-alanyl-D-alanine + UMP. It participates in cell wall biogenesis; peptidoglycan biosynthesis. Its function is as follows. Catalyzes the initial step of the lipid cycle reactions in the biosynthesis of the cell wall peptidoglycan: transfers peptidoglycan precursor phospho-MurNAc-pentapeptide from UDP-MurNAc-pentapeptide onto the lipid carrier undecaprenyl phosphate, yielding undecaprenyl-pyrophosphoryl-MurNAc-pentapeptide, known as lipid I. The sequence is that of Phospho-N-acetylmuramoyl-pentapeptide-transferase from Francisella tularensis subsp. mediasiatica (strain FSC147).